The sequence spans 321 residues: Cysteine and histidine-rich domain-containing protein 1 (321 aa).

Residues C9, C14, C28, H31, C46, C47, C63, H68, C152, C157, C170, H173, C188, C189, C205, and H210 each coordinate Zn(2+). CHORD domains follow at residues 9-68 and 152-210; these read CYHK…RGKH and CRNN…SGEH. Residues 218–308 enclose the CS domain; sequence VSKFREDWFS…KHGTGWPRLK (91 aa).

Regulates centrosome duplication. Controls the secretion of the tyrosine kinase receptor let-23/EGFR from the endoplasmic reticulum and is required for the localization of let-23/EGFR to the plasma membrane of vulval precursor cells. It thus plays a role in positively regulating let/EGFR signaling, and anchor cell and vulval precursor cell alignment. Plays a role in vulval development and morphogenesis. The chain is Cysteine and histidine-rich domain-containing protein 1 from Caenorhabditis elegans.